The chain runs to 523 residues: GMP synthase [glutamine-hydrolyzing] (523 aa).

Positions 9–198 constitute a Glutamine amidotransferase type-1 domain; that stretch reads PVLVVDFGAQ…LTEIAGLEQN (190 aa). The Nucleophile role is filled by Cys-86. Residues His-172 and Glu-174 contribute to the active site. Residues 199 to 397 enclose the GMPS ATP-PPase domain; the sequence is WTAANIAEEL…LGLPEEIVGR (199 aa). ATP is bound at residue 227-233; it reads SGGVDSA.

As to quaternary structure, homodimer.

It catalyses the reaction XMP + L-glutamine + ATP + H2O = GMP + L-glutamate + AMP + diphosphate + 2 H(+). It participates in purine metabolism; GMP biosynthesis; GMP from XMP (L-Gln route): step 1/1. Its function is as follows. Catalyzes the synthesis of GMP from XMP. The polypeptide is GMP synthase [glutamine-hydrolyzing] (Corynebacterium glutamicum (strain ATCC 13032 / DSM 20300 / JCM 1318 / BCRC 11384 / CCUG 27702 / LMG 3730 / NBRC 12168 / NCIMB 10025 / NRRL B-2784 / 534)).